The primary structure comprises 152 residues: Endoribonuclease YbeY (152 aa).

Zn(2+) is bound by residues histidine 113, histidine 117, and histidine 123.

The protein belongs to the endoribonuclease YbeY family. The cofactor is Zn(2+).

The protein resides in the cytoplasm. In terms of biological role, single strand-specific metallo-endoribonuclease involved in late-stage 70S ribosome quality control and in maturation of the 3' terminus of the 16S rRNA. In Wolbachia pipientis subsp. Culex pipiens (strain wPip), this protein is Endoribonuclease YbeY.